Here is a 105-residue protein sequence, read N- to C-terminus: Small ribosomal subunit protein uS10 (105 aa).

Belongs to the universal ribosomal protein uS10 family. Part of the 30S ribosomal subunit.

Its function is as follows. Involved in the binding of tRNA to the ribosomes. The protein is Small ribosomal subunit protein uS10 of Desulfovibrio desulfuricans (strain ATCC 27774 / DSM 6949 / MB).